The following is a 688-amino-acid chain: Sialic acid-binding Ig-like lectin 10 (688 aa).

The first 17 residues, 1-17 (MSLLLFLLSFLLDGPQG), serve as a signal peptide directing secretion. The Extracellular segment spans residues 18–543 (QMESYFLQVQ…DKDSATAFSK (526 aa)). The region spanning 26 to 138 (VQRIVKAQEG…SFKEEFRLQV (113 aa)) is the Ig-like V-type domain. 3 disulfides stabilise this stretch: Cys37-Cys172, Cys42-Cys102, and Cys163-Cys214. Arg120 lines the N-acetylneuraminate pocket. Positions 145–228 (PDIFIPEVLE…SRMSTQRTVR (84 aa)) constitute an Ig-like C2-type 1 domain. Asn195 and Asn246 each carry an N-linked (GlcNAc...) asparagine glycan. 2 Ig-like C2-type domains span residues 250 to 334 (PDLH…LDLS) and 339 to 436 (PQDL…LSLS). 2 cysteine pairs are disulfide-bonded: Cys271–Cys318 and Cys375–Cys420. A helical transmembrane segment spans residues 544–564 (GAVLGFGITALLALCLIVVIV). The Cytoplasmic segment spans residues 565–688 (KTLQKKGTQE…YSDYTEVRVH (124 aa)). An ITIM motif 1 motif is present at residues 588–593 (LDYINV). The tract at residues 602–656 (RNWKAEPDAPSRSSPLDTHFPKPKKKQKDPHFTYPGCPDPTSSSQVPVSENNPEE) is disordered. A compositionally biased stretch (polar residues) spans 641–652 (PTSSSQVPVSEN). An ITIM motif 2 motif is present at residues 657–662 (LHYAAL). Residue Tyr659 is modified to Phosphotyrosine.

It belongs to the immunoglobulin superfamily. SIGLEC (sialic acid binding Ig-like lectin) family. In terms of assembly, interacts with PTPN6/SHP-1 upon phosphorylation. Interacts with NCF1. Interacts with CD24; the probable CD24:SIGLEC10 complex is proposed to inhibit HGMB1-mediated tissue damage immune response. Interacts with HMGB1; the interaction is dependent on CD24. Associates with membrane IgM on the B cell surface. Interacts with RIGI, CBL and PTPN11. Phosphorylation of Tyr-659 is involved in binding to PTPN6. In terms of tissue distribution, expressed in B cells with high levels in pre-B cells and B1a cells of the peritoneal cavity.

It is found in the cell membrane. Its function is as follows. Putative adhesion molecule that mediates sialic-acid dependent binding to cells. Preferentially binds to alpha-2,3- or alpha-2,6-linked sialic acid. The sialic acid recognition site may be masked by cis interactions with sialic acids on the same cell surface. In the immune response, seems to act as an inhibitory receptor upon ligand induced tyrosine phosphorylation by recruiting cytoplasmic phosphatase(s) via their SH2 domain(s) that block signal transduction through dephosphorylation of signaling molecules. Involved in negative regulation of B-cell antigen receptor signaling and specifically acts on B1 cells to inhibit Ca(2+) signaling, cellular expansion and antibody secretion. The inhibition of B cell activation is dependent on PTPN6/SHP-1. In association with CD24 may be involved in the selective suppression of the immune response to danger-associated molecular patterns (DAMPs) such as HMGB1, HSP70 and HSP90. In association with CD24 may regulate the immune repsonse of natural killer (NK) cells. Plays a role in the control of autoimmunity. During initiation of adaptive immune responses by CD8-alpha(+) dendritic cells inhibits cross-presentation by impairing the formation of MHC class I-peptide complexes. The function seems to implicate recruitment of PTPN6/SHP-1, which dephosphorylates NCF1 of the NADPH oxidase complex consequently promoting phagosomal acidification. (Microbial infection) During infection by RNA viruses inhibits RIG-I signaling in macrophages by promoting its CBL-dependent ubiquitination and degradation via PTPN11/SHP-2. In Mus musculus (Mouse), this protein is Sialic acid-binding Ig-like lectin 10 (Siglec10).